Reading from the N-terminus, the 192-residue chain is Ion-translocating oxidoreductase complex subunit A (192 aa).

A run of 6 helical transmembrane segments spans residues 5 to 25 (ILLLIGTVLVNNFVLVKFLGL), 39 to 59 (IGMGLATTFVLTMASVCAYLV), 72 to 92 (LRTMSFILVIAVVVQFTEMVV), 102 to 122 (LLGIFLPLITTNCAVLGVALL), 134 to 154 (IIYGFGAAVGFSLVLILFASM), and 171 to 191 (SIAMITAGLMSLAFMGFTGLV).

It belongs to the NqrDE/RnfAE family. In terms of assembly, the complex is composed of six subunits: RnfA, RnfB, RnfC, RnfD, RnfE and RnfG.

The protein localises to the cell inner membrane. Its function is as follows. Part of a membrane-bound complex that couples electron transfer with translocation of ions across the membrane. This is Ion-translocating oxidoreductase complex subunit A from Vibrio vulnificus (strain CMCP6).